Consider the following 193-residue polypeptide: Probable nicotinate-nucleotide adenylyltransferase (193 aa).

This sequence belongs to the NadD family.

It catalyses the reaction nicotinate beta-D-ribonucleotide + ATP + H(+) = deamido-NAD(+) + diphosphate. Its pathway is cofactor biosynthesis; NAD(+) biosynthesis; deamido-NAD(+) from nicotinate D-ribonucleotide: step 1/1. Catalyzes the reversible adenylation of nicotinate mononucleotide (NaMN) to nicotinic acid adenine dinucleotide (NaAD). This Endomicrobium trichonymphae protein is Probable nicotinate-nucleotide adenylyltransferase.